Here is a 248-residue protein sequence, read N- to C-terminus: Tetrachloro-P-hydroquinone reductive dehalogenase (248 aa).

A GST N-terminal domain is found at 2–84 (PEVSLYNYTM…EAAKLGKVGI (83 aa)). Positions 133 to 248 (YAEKYPELRS…RVMPNWKGGI (116 aa)) constitute a GST C-terminal domain.

The protein belongs to the GST superfamily. As to quaternary structure, homodimer.

The enzyme catalyses 2,6-dichlorohydroquinone + glutathione disulfide + chloride + H(+) = 2,3,6-trichlorohydroquinone + 2 glutathione. It catalyses the reaction 2,3,6-trichlorohydroquinone + glutathione disulfide + chloride = 2,3,5,6-tetrachlorohydroquinone + 2 glutathione. The protein operates within xenobiotic degradation; pentachlorophenol degradation. Sequential reduction of tetrachloro-p-hydroquinone to monochlorophenol, using glutathione as the reducing agent. The chain is Tetrachloro-P-hydroquinone reductive dehalogenase (pcpC) from Sphingobium chlorophenolicum.